The chain runs to 190 residues: Elongation factor P 2 (190 aa).

The protein belongs to the elongation factor P family.

It is found in the cytoplasm. Its pathway is protein biosynthesis; polypeptide chain elongation. Involved in peptide bond synthesis. Stimulates efficient translation and peptide-bond synthesis on native or reconstituted 70S ribosomes in vitro. Probably functions indirectly by altering the affinity of the ribosome for aminoacyl-tRNA, thus increasing their reactivity as acceptors for peptidyl transferase. The chain is Elongation factor P 2 (efp2) from Protochlamydia amoebophila (strain UWE25).